Reading from the N-terminus, the 301-residue chain is Homoserine O-acetyltransferase (301 aa).

Cys-142 (acyl-thioester intermediate) is an active-site residue. Residues Lys-163 and Ser-192 each coordinate substrate. Catalysis depends on His-235, which acts as the Proton acceptor. Glu-237 is a catalytic residue. Substrate is bound at residue Arg-249.

Belongs to the MetA family.

It localises to the cytoplasm. The catalysed reaction is L-homoserine + acetyl-CoA = O-acetyl-L-homoserine + CoA. The protein operates within amino-acid biosynthesis; L-methionine biosynthesis via de novo pathway; O-acetyl-L-homoserine from L-homoserine: step 1/1. Transfers an acetyl group from acetyl-CoA to L-homoserine, forming acetyl-L-homoserine. In Bacillus cereus (strain ZK / E33L), this protein is Homoserine O-acetyltransferase.